The sequence spans 121 residues: Large ribosomal subunit protein bL19 (121 aa).

Belongs to the bacterial ribosomal protein bL19 family.

In terms of biological role, this protein is located at the 30S-50S ribosomal subunit interface and may play a role in the structure and function of the aminoacyl-tRNA binding site. The protein is Large ribosomal subunit protein bL19 of Mesomycoplasma hyopneumoniae (strain 232) (Mycoplasma hyopneumoniae).